Reading from the N-terminus, the 128-residue chain is MGIQGGSVLFGLLLVLAVFCHSGHSLQCYNCPNPTADCKTAVNCSSDFDACLITKAGLQVYNKCWKFEHCNFNDVTTRLRENELTYYCCKKDLCNFNEQLENGGTSLSEKTVLLLVTPFLAAAWSLHP.

Positions 1–25 (MGIQGGSVLFGLLLVLAVFCHSGHS) are cleaved as a signal peptide. Residues 26–108 (LQCYNCPNPT…QLENGGTSLS (83 aa)) enclose the UPAR/Ly6 domain. Intrachain disulfides connect Cys-28–Cys-51, Cys-31–Cys-38, and Cys-44–Cys-64. The N-linked (GlcNAc...) asparagine glycan is linked to Asn-43. N-linked (Glc) (glycation) lysine glycosylation is present at Lys-66. Cystine bridges form between Cys-70–Cys-88 and Cys-89–Cys-94. 2 O-linked (GalNAc...) threonine glycosylation sites follow: Thr-76 and Thr-77. Asn-102 carries the GPI-anchor amidated asparagine lipid modification. Residues 103–128 (GGTSLSEKTVLLLVTPFLAAAWSLHP) constitute a propeptide, removed in mature form.

As to quaternary structure, interacts with T-cell surface antigen CD2. In terms of processing, N- and O-glycosylated. The N-glycosylation mainly consists of a family of biantennary complex-type structures with and without lactosamine extensions and outer arm fucose residues. Also significant amounts of triantennary complexes (22%). Variable sialylation also present in the Asn-43 oligosaccharide. The predominant O-glycans are mono-sialylated forms of the disaccharide, Gal-beta-1,3GalNAc, and their sites of attachment are probably on Thr-76 and Thr-77. The GPI-anchor of soluble urinary CD59 has no inositol-associated phospholipid, but is composed of seven different GPI-anchor variants of one or more monosaccharide units. Major variants contain sialic acid, mannose and glucosamine. Sialic acid linked to an N-acetylhexosamine-galactose arm is present in two variants. Post-translationally, glycated. Glycation is found in diabetic subjects, but only at minimal levels in nondiabetic subjects. Glycated CD59 lacks MAC-inhibitory function and confers to vascular complications of diabetes.

It is found in the cell membrane. The protein localises to the secreted. Its function is as follows. Potent inhibitor of the complement membrane attack complex (MAC) action, which protects human cells from damage during complement activation. Acts by binding to the beta-haipins of C8 (C8A and C8B) components of the assembling MAC, forming an intermolecular beta-sheet that prevents incorporation of the multiple copies of C9 required for complete formation of the osmolytic pore. Functionally, the soluble form from urine retains its specific complement binding activity, but exhibits greatly reduced ability to inhibit complement membrane attack complex (MAC) assembly on cell membranes. The protein is CD59 glycoprotein of Homo sapiens (Human).